The primary structure comprises 306 residues: D-glucosamine-6-phosphate 4-epimerase (306 aa).

In terms of domain architecture, SIS spans 19-153 (DIPGVKTAEK…TGSNYRVQDL (135 aa)). The active-site Proton acceptor is the E200. The Proton donor role is filled by H216. R296 functions as the Proton acceptor in the catalytic mechanism.

The protein belongs to the PGI/PMI family.

The enzyme catalyses D-glucosamine 6-phosphate = D-galactosamine 6-phosphate. In terms of biological role, involved in the synthesis of UDP-N-acetylgalactosamine (UDP-GalNAc). Catalyzes the conversion of glucosamine-6-phosphate (GlcN-6-P) to galactosamine-6-phosphate (GalN-6-P). The chain is D-glucosamine-6-phosphate 4-epimerase from Sulfolobus acidocaldarius (strain ATCC 33909 / DSM 639 / JCM 8929 / NBRC 15157 / NCIMB 11770).